The primary structure comprises 507 residues: E3 ubiquitin-protein ligase TRIM31 (507 aa).

An RING-type zinc finger spans residues 16 to 56; it reads CPICMEILQDPVTIDCGHNFCLQCISQVGKTSEKIQCPLCK. The B box-type zinc-finger motif lies at 89 to 130; it reads KEDSRCQRHKEKLHYFCEQDGAFLCVVCRDSKDHKSHNVTLI. Positions 94, 97, 116, and 122 each coordinate Zn(2+). Coiled-coil stretches lie at residues 176 to 241 and 269 to 298; these read EKLK…LQSS and EDLEKKCSEAKARHESIIKTLTELKDDMNA. One can recognise a B30.2/SPRY domain in the interval 315 to 507; sequence EKESWSLLQK…VACSHITLSP (193 aa).

It belongs to the TRIM/RBCC family. May form oligomers. Interacts with isoform p52shc of SHC1. Auto-ubiquitinated (in vitro). In terms of tissue distribution, highly expressed in the gastrointestrinal tract, with high expression in the small intestine, moderate in the large intestine and weak in the stomach and esophagus.

It localises to the cytoplasm. The protein localises to the mitochondrion. The catalysed reaction is S-ubiquitinyl-[E2 ubiquitin-conjugating enzyme]-L-cysteine + [acceptor protein]-L-lysine = [E2 ubiquitin-conjugating enzyme]-L-cysteine + N(6)-ubiquitinyl-[acceptor protein]-L-lysine.. It participates in protein modification; protein ubiquitination. E3 ubiquitin-protein ligase that acts as a regulator of antiviral immune response and inflammation by mediating ubiquitination of substrates. Acts as a regulator of innate immune defense against viruses by mediating 'Lys-63'-linked ubiquitination of MAVS, promoting MAVS polymerization and formation of three-stranded helical filaments on mitochondria. Acts as a negative regulator of the NLRP3 inflammasome by catalyzing 'Lys-48'-linked ubiquitination of NLRP3, leading to its degradation. Regulator of Src-induced anchorage independent cell growth. This chain is E3 ubiquitin-protein ligase TRIM31, found in Mus musculus (Mouse).